The following is a 118-amino-acid chain: Putative membrane protein insertion efficiency factor (118 aa).

Residues 76–118 (WDPVPQRRPRRRDAAAADAAMSAPHACKGSPHAVVGDTNDGST) are disordered. Residues 91-101 (AADAAMSAPHA) are compositionally biased toward low complexity.

The protein belongs to the UPF0161 family.

Its subcellular location is the cell membrane. Could be involved in insertion of integral membrane proteins into the membrane. The protein is Putative membrane protein insertion efficiency factor of Nocardia farcinica (strain IFM 10152).